The chain runs to 396 residues: S-adenosylmethionine synthase 2 (396 aa).

Mg(2+) is bound at residue Glu-13. Residue His-19 participates in ATP binding. Residue Glu-47 participates in K(+) binding. The L-methionine site is built by Glu-60 and Gln-103. Residues 171–173 (DGK), 239–242 (SGRF), Asp-250, 256–257 (RK), Ala-273, Lys-277, and Lys-281 contribute to the ATP site. Asp-250 contributes to the L-methionine binding site. Position 281 (Lys-281) interacts with L-methionine.

Belongs to the AdoMet synthase family. As to quaternary structure, homotetramer. Requires Mn(2+) as cofactor. The cofactor is Mg(2+). It depends on Co(2+) as a cofactor. K(+) is required as a cofactor. In terms of tissue distribution, expressed in roots, stems and leaves (at protein level).

Its subcellular location is the cytoplasm. It catalyses the reaction L-methionine + ATP + H2O = S-adenosyl-L-methionine + phosphate + diphosphate. It participates in amino-acid biosynthesis; S-adenosyl-L-methionine biosynthesis; S-adenosyl-L-methionine from L-methionine: step 1/1. Functionally, catalyzes the formation of S-adenosylmethionine from methionine and ATP. The reaction comprises two steps that are both catalyzed by the same enzyme: formation of S-adenosylmethionine (AdoMet) and triphosphate, and subsequent hydrolysis of the triphosphate. May be involved in the synthesis of betain in response to abiotic stress such as high salinity. The sequence is that of S-adenosylmethionine synthase 2 (SAMS2) from Atriplex nummularia (Old man saltbush).